Consider the following 449-residue polypeptide: MTAVIALVGRPNVGKSTFFNRLTRTREALVADLPGLTRDRHYGTAQFEGRQYLVVDTGGFEPEEREGLVAAMAAQTRLAITEADAICFLVDAKEGLSTQDAEIAQELRRGGKPIYLVVNKMDAKGAVSELPEFYRLGLGTPYTISAAHGHGVEPLLEAIFSDLPTSEDDTADAARKGPRIAMLGRPNVGKSTLVNTMLGEKRVLVFDEPGTTRDSIRIPYERQGKPYVMIDTAGMRRRARVGEGLEKLSVLKTLSALREADVVLLVLDARLGIAEQDAHLVGVAVELGRPIVVVVNKWDGMTPEERKAVKQELERRLDFIRYAPVYTISALHGTGVGDLYKSIDQLWIDSRRHFSTAELNRALADVIETHQPPMVGGRRIKLRYCHQGGENPITLVFHGNQLTRLPGTYKRYLESAFRRALHLEAVPLRLVFRQGENPYDPQPKNGRQH.

2 EngA-type G domains span residues 3–167 (AVIA…PTSE) and 178–351 (PRIA…IDSR). Residues 9–16 (GRPNVGKS), 56–60 (DTGGF), 119–122 (NKMD), 184–191 (GRPNVGKS), 231–235 (DTAGM), and 296–299 (NKWD) each bind GTP. The KH-like domain maps to 352–436 (RHFSTAELNR…PLRLVFRQGE (85 aa)).

Belongs to the TRAFAC class TrmE-Era-EngA-EngB-Septin-like GTPase superfamily. EngA (Der) GTPase family. As to quaternary structure, associates with the 50S ribosomal subunit.

Its function is as follows. GTPase that plays an essential role in the late steps of ribosome biogenesis. The protein is GTPase Der of Acidithiobacillus ferrooxidans (strain ATCC 23270 / DSM 14882 / CIP 104768 / NCIMB 8455) (Ferrobacillus ferrooxidans (strain ATCC 23270)).